Consider the following 40-residue polypeptide: Dolichyl-diphosphooligosaccharide--protein glycosyltransferase subunit 4 (40 aa).

Residues 1 to 4 (MITD) are Lumenal-facing. A helical membrane pass occupies residues 5-25 (VQLAIFSNVLGVFLFLLVVAY). Residues 26-40 (HYINANTGKPIPKAK) are Cytoplasmic-facing.

It belongs to the OST4 family. In terms of assembly, component of the oligosaccharyltransferase (OST) complex.

The protein resides in the endoplasmic reticulum membrane. In terms of biological role, subunit of the oligosaccharyl transferase (OST) complex that catalyzes the initial transfer of a defined glycan (Glc(3)Man(9)GlcNAc(2) in eukaryotes) from the lipid carrier dolichol-pyrophosphate to an asparagine residue within an Asn-X-Ser/Thr consensus motif in nascent polypeptide chains, the first step in protein N-glycosylation. N-glycosylation occurs cotranslationally and the complex associates with the Sec61 complex at the channel-forming translocon complex that mediates protein translocation across the endoplasmic reticulum (ER). All subunits are required for a maximal enzyme activity. The sequence is that of Dolichyl-diphosphooligosaccharide--protein glycosyltransferase subunit 4 from Drosophila ananassae (Fruit fly).